The chain runs to 331 residues: UPF0194 membrane protein YbhG (331 aa).

The N-terminal stretch at 1 to 19 (MKKPVVIGLAIAAIVAVIA) is a signal peptide. Positions 107–208 (EEIAQAAAAV…LDLQDTTLIA (102 aa)) form a coiled coil.

This sequence belongs to the UPF0194 family.

It localises to the periplasm. The sequence is that of UPF0194 membrane protein YbhG from Salmonella heidelberg (strain SL476).